We begin with the raw amino-acid sequence, 158 residues long: Large ribosomal subunit protein uL13 (158 aa).

The tract at residues 129 to 158 (PEHGHHAQKPVALDFGAMNNKNGRGNNAGR) is disordered. Residues 144 to 158 (GAMNNKNGRGNNAGR) are compositionally biased toward low complexity.

It belongs to the universal ribosomal protein uL13 family. In terms of assembly, part of the 50S ribosomal subunit.

Functionally, this protein is one of the early assembly proteins of the 50S ribosomal subunit, although it is not seen to bind rRNA by itself. It is important during the early stages of 50S assembly. In Anaplasma phagocytophilum (strain HZ), this protein is Large ribosomal subunit protein uL13.